The following is a 148-amino-acid chain: UPF0756 membrane protein KPN78578_11500 (148 aa).

4 helical membrane-spanning segments follow: residues A14 to V34, L51 to L71, L86 to M106, and V121 to I141.

The protein belongs to the UPF0756 family.

It is found in the cell membrane. This Klebsiella pneumoniae subsp. pneumoniae (strain ATCC 700721 / MGH 78578) protein is UPF0756 membrane protein KPN78578_11500.